The primary structure comprises 72 residues: Translation initiation factor IF-1 (72 aa).

The S1-like domain occupies 1-72; it reads MAKEENIEMQ…SKGRIIFRAR (72 aa).

It belongs to the IF-1 family. As to quaternary structure, component of the 30S ribosomal translation pre-initiation complex which assembles on the 30S ribosome in the order IF-2 and IF-3, IF-1 and N-formylmethionyl-tRNA(fMet); mRNA recruitment can occur at any time during PIC assembly.

It is found in the cytoplasm. Its function is as follows. One of the essential components for the initiation of protein synthesis. Stabilizes the binding of IF-2 and IF-3 on the 30S subunit to which N-formylmethionyl-tRNA(fMet) subsequently binds. Helps modulate mRNA selection, yielding the 30S pre-initiation complex (PIC). Upon addition of the 50S ribosomal subunit IF-1, IF-2 and IF-3 are released leaving the mature 70S translation initiation complex. The sequence is that of Translation initiation factor IF-1 from Colwellia psychrerythraea (strain 34H / ATCC BAA-681) (Vibrio psychroerythus).